The sequence spans 304 residues: MGIDFLFILKALIIAIVEGLTEFVPVSSTGHMILVGDLIHFNTQSGGFPEMYEVVIQLGAILAVVVLYWRKISSSVVEFLSYIFSFIGLKTSGDKRKYEKRLAESETGFRFGINVIIGTIPAAILGLLFHDEIKEYLFSTKTVAIGFIVGGILLIVIENNFRKRAKRSKIVKDIDKMTYGQSLLVGCFQCLSLWPGMSRSASTIMGGWISGLSTTVATEFTFFLAIPAMVGASGLDLFKFDYSQMNATNWISLILGFIVAFIVSLVVIDKFINYLKKKPMRVFAIYRVFAGIVLAILIFTKVIS.

The next 8 helical transmembrane spans lie at 5–25, 47–67, 72–92, 111–131, 137–157, 209–231, 248–268, and 283–303; these read FLFI…EFVP, GFPE…VVVL, ISSS…LKTS, FGIN…LFHD, LFST…LIVI, ISGL…AMVG, TNWI…LVVI, and FAIY…TKVI.

It belongs to the UppP family.

It is found in the cell membrane. The enzyme catalyses di-trans,octa-cis-undecaprenyl diphosphate + H2O = di-trans,octa-cis-undecaprenyl phosphate + phosphate + H(+). Its function is as follows. Catalyzes the dephosphorylation of undecaprenyl diphosphate (UPP). Confers resistance to bacitracin. This is Undecaprenyl-diphosphatase from Clostridium perfringens (strain 13 / Type A).